A 259-amino-acid chain; its full sequence is Global transcriptional regulator CodY (259 aa).

The GAF domain stretch occupies residues 1–155; that stretch reads MALLQKTRII…GATVVGMEIL (155 aa). Positions 203–222 form a DNA-binding region, H-T-H motif; it reads ASKIADRVGITRSVIVNALR. At Ser-215 the chain carries Phosphoserine.

Belongs to the CodY family.

The protein localises to the cytoplasm. DNA-binding global transcriptional regulator which is involved in the adaptive response to starvation and acts by directly or indirectly controlling the expression of numerous genes in response to nutrient availability. During rapid exponential growth, CodY is highly active and represses genes whose products allow adaptation to nutrient depletion. The chain is Global transcriptional regulator CodY from Bacillus velezensis (strain DSM 23117 / BGSC 10A6 / LMG 26770 / FZB42) (Bacillus amyloliquefaciens subsp. plantarum).